The primary structure comprises 195 residues: MSRIKLIVGLANPGAEYAATRHNAGAWYADLLAERHNQSLKEESKFFGFTARLNLGGEDVRLLVPTTFMNLSGKAVAAMATFYRIPAEEILVAHDELDLPPGVAKFKQGGGHGGHNGLKDIISRLGNNQNFHRLRIGIGHPGDRQKVVGFVLGKPQAAEQRLIDDAVDEAVRCTEVWMKEDRLKAMNRLHSFKAG.

Tyr-17 contributes to the tRNA binding site. The active-site Proton acceptor is His-22. Residues Phe-68, Asn-70, and Asn-116 each contribute to the tRNA site.

Belongs to the PTH family. In terms of assembly, monomer.

The protein localises to the cytoplasm. The catalysed reaction is an N-acyl-L-alpha-aminoacyl-tRNA + H2O = an N-acyl-L-amino acid + a tRNA + H(+). In terms of biological role, hydrolyzes ribosome-free peptidyl-tRNAs (with 1 or more amino acids incorporated), which drop off the ribosome during protein synthesis, or as a result of ribosome stalling. Functionally, catalyzes the release of premature peptidyl moieties from peptidyl-tRNA molecules trapped in stalled 50S ribosomal subunits, and thus maintains levels of free tRNAs and 50S ribosomes. This chain is Peptidyl-tRNA hydrolase, found in Erwinia tasmaniensis (strain DSM 17950 / CFBP 7177 / CIP 109463 / NCPPB 4357 / Et1/99).